Reading from the N-terminus, the 151-residue chain is GTP-dependent dephospho-CoA kinase (151 aa).

GTP contacts are provided by Asp30, Val31, Asp49, Lys51, and Glu104.

Belongs to the GTP-dependent DPCK family.

The enzyme catalyses 3'-dephospho-CoA + GTP = GDP + CoA + H(+). It functions in the pathway cofactor biosynthesis; coenzyme A biosynthesis. Catalyzes the GTP-dependent phosphorylation of the 3'-hydroxyl group of dephosphocoenzyme A to form coenzyme A (CoA). The sequence is that of GTP-dependent dephospho-CoA kinase from Cenarchaeum symbiosum (strain A).